The following is a 173-amino-acid chain: HAM34 protein (173 aa).

Positions 22-89 (AAPATTPDTA…ADGTQTATAP (68 aa)) are enriched in low complexity. A disordered region spans residues 22-155 (AAPATTPDTA…ATDTTSGASH (134 aa)). Positions 95–133 (TEESSASGEMTPTVGTDTSDQVSDSTAAGPSTPEGSMTG) are enriched in polar residues. Positions 134–155 (TSTPKASDSSSSATDTTSGASH) are enriched in low complexity.

Germinating spores.

Its function is as follows. Could be a structural protein required for the infection process of B.lactucae. The sequence is that of HAM34 protein (HAM34) from Bremia lactucae (Lettuce downy mildew).